The chain runs to 66 residues: Large ribosomal subunit protein bL35 (66 aa).

Positions 1 to 16 are enriched in basic residues; sequence MPKQKTHRASAKRFKR. Positions 1 to 20 are disordered; sequence MPKQKTHRASAKRFKRTGSG.

It belongs to the bacterial ribosomal protein bL35 family.

The polypeptide is Large ribosomal subunit protein bL35 (Streptococcus thermophilus (strain ATCC BAA-250 / LMG 18311)).